The following is a 426-amino-acid chain: Tyrosine--tRNA ligase (426 aa).

Residue Tyr37 coordinates L-tyrosine. The 'HIGH' region motif lies at 42–51 (PTADSLHLGH). Tyr175 and Gln179 together coordinate L-tyrosine. The 'KMSKS' region signature appears at 235–239 (KFGKT). Lys238 is an ATP binding site. The S4 RNA-binding domain occupies 357 to 415 (TDLMQALVESELQPSRGQARKAIAANGVTVNGIKQPDPDYVLNENDRYFSNYTLLRRGK).

Belongs to the class-I aminoacyl-tRNA synthetase family. TyrS type 1 subfamily. As to quaternary structure, homodimer.

It localises to the cytoplasm. The enzyme catalyses tRNA(Tyr) + L-tyrosine + ATP = L-tyrosyl-tRNA(Tyr) + AMP + diphosphate + H(+). Its function is as follows. Catalyzes the attachment of tyrosine to tRNA(Tyr) in a two-step reaction: tyrosine is first activated by ATP to form Tyr-AMP and then transferred to the acceptor end of tRNA(Tyr). In Klebsiella pneumoniae (strain 342), this protein is Tyrosine--tRNA ligase.